The sequence spans 62 residues: Large ribosomal subunit protein uL29 (62 aa).

Belongs to the universal ribosomal protein uL29 family.

This Acholeplasma laidlawii (strain PG-8A) protein is Large ribosomal subunit protein uL29.